The chain runs to 294 residues: ATP phosphoribosyltransferase (294 aa).

This sequence belongs to the ATP phosphoribosyltransferase family. Long subfamily. Requires Mg(2+) as cofactor.

It is found in the cytoplasm. It carries out the reaction 1-(5-phospho-beta-D-ribosyl)-ATP + diphosphate = 5-phospho-alpha-D-ribose 1-diphosphate + ATP. Its pathway is amino-acid biosynthesis; L-histidine biosynthesis; L-histidine from 5-phospho-alpha-D-ribose 1-diphosphate: step 1/9. Its activity is regulated as follows. Feedback inhibited by histidine. Its function is as follows. Catalyzes the condensation of ATP and 5-phosphoribose 1-diphosphate to form N'-(5'-phosphoribosyl)-ATP (PR-ATP). Has a crucial role in the pathway because the rate of histidine biosynthesis seems to be controlled primarily by regulation of HisG enzymatic activity. This Chlorobium phaeobacteroides (strain DSM 266 / SMG 266 / 2430) protein is ATP phosphoribosyltransferase.